Here is a 298-residue protein sequence, read N- to C-terminus: UDP-3-O-acyl-N-acetylglucosamine deacetylase (298 aa).

3 residues coordinate Zn(2+): His75, His232, and Asp236. Residue His259 is the Proton donor of the active site.

This sequence belongs to the LpxC family. Zn(2+) is required as a cofactor.

The catalysed reaction is a UDP-3-O-[(3R)-3-hydroxyacyl]-N-acetyl-alpha-D-glucosamine + H2O = a UDP-3-O-[(3R)-3-hydroxyacyl]-alpha-D-glucosamine + acetate. It participates in glycolipid biosynthesis; lipid IV(A) biosynthesis; lipid IV(A) from (3R)-3-hydroxytetradecanoyl-[acyl-carrier-protein] and UDP-N-acetyl-alpha-D-glucosamine: step 2/6. Catalyzes the hydrolysis of UDP-3-O-myristoyl-N-acetylglucosamine to form UDP-3-O-myristoylglucosamine and acetate, the committed step in lipid A biosynthesis. This chain is UDP-3-O-acyl-N-acetylglucosamine deacetylase, found in Nitratiruptor sp. (strain SB155-2).